The following is a 531-amino-acid chain: Protein arginine N-methyltransferase 3 (531 aa).

The interval 1-43 (MCSLASGATGGRGAVENEEDLPELSDSGDEAAWEDEDDADLPH) is disordered. Cys2 is subject to N-acetylcysteine. Residues 16–39 (ENEEDLPELSDSGDEAAWEDEDDA) show a composition bias toward acidic residues. Phosphoserine is present on residues Ser25 and Ser27. The segment at 48–71 (TPCLFCNRLFTSAEETFSHCKSEH) adopts a C2H2-type zinc-finger fold. An interaction with ZNF200 region spans residues 48-71 (TPCLFCNRLFTSAEETFSHCKSEH). A Phosphoserine modification is found at Ser171. The mediates interaction with ALDH1A1 stretch occupies residues 186–531 (MKQFAQDFVM…NNSTQTYGLQ (346 aa)). In terms of domain architecture, SAM-dependent MTase PRMT-type spans 217–531 (DGVYFSSYGH…NNSTQTYGLQ (315 aa)). Residues Arg239, Gly263, Asp285, Ile313, and Glu314 each coordinate S-adenosyl-L-homocysteine. Residues Glu329 and Glu338 contribute to the active site. Ser343 lines the S-adenosyl-L-homocysteine pocket.

The protein belongs to the class I-like SAM-binding methyltransferase superfamily. Protein arginine N-methyltransferase family. Monomer and homodimer. Interacts with EPB41L3 (via FERM domain); the interaction is direct and inhibits the protein-arginine N-methyltransferase activity of PRMT3. Interacts with the 40S ribosomal protein RPS2. Interacts with ALDH1A1; the interaction is direct, inhibits ALDH1A1 aldehyde dehydrogenase activity and is independent of the methyltransferase activity of PRMT3. Interacts (via zinc-finger) with ZNF200 (via C-terminus); the interaction is direct and required to localize PRMT3 to the nucleus and inhibit its proteasomal degradation.

It localises to the cytoplasm. It is found in the cytosol. The protein localises to the nucleus. It catalyses the reaction L-arginyl-[protein] + S-adenosyl-L-methionine = N(omega)-methyl-L-arginyl-[protein] + S-adenosyl-L-homocysteine + H(+). The enzyme catalyses L-arginyl-[protein] + 2 S-adenosyl-L-methionine = N(omega),N(omega)-dimethyl-L-arginyl-[protein] + 2 S-adenosyl-L-homocysteine + 2 H(+). Its activity is regulated as follows. Inhibited by N-ethylmaleimide and high concentrations of zinc chloride. Allosterically inhibited by SGC707. Allosterically inhibited by (1-(benzo[d][1,2,3]thiadiazol- 6-yl)-3-(2-cyclohexenylethyl)urea) and derivatives thereof. Its function is as follows. Protein-arginine N-methyltransferase that catalyzes both the monomethylation and asymmetric dimethylation of the guanidino nitrogens of arginine residues in target proteins, and therefore falls into the group of type I methyltransferases. Catalyzes the asymmetric arginine dimethylation at multiple sites in the Arg/Gly-rich region of small ribosomal subunit protein uS5/RPS2. Also appears to methylate other ribosomal proteins. May regulate retinoic acid synthesis and signaling by inhibiting ALDH1A1 retinal dehydrogenase activity. Contributes to methylation of histone H4 'Arg-3', a specific tag for epigenetic transcriptional activation. Mediates asymmetric arginine dimethylation of histone H4 'Arg-3' (H4R3me2a) in the promoter region of miRNA miR-3648, to promote its transcription and osteogenesis. This Homo sapiens (Human) protein is Protein arginine N-methyltransferase 3.